The sequence spans 324 residues: Olfactory receptor 1L3 (324 aa).

Topologically, residues 1-25 are extracellular; that stretch reads MGMSNLTRLSEFILLGLSSRSEDQR. N5 carries N-linked (GlcNAc...) asparagine glycosylation. A helical membrane pass occupies residues 26–49; that stretch reads PLFALFLIIYLVTLMGNLLIILAI. At 50–57 the chain is on the cytoplasmic side; sequence HSDPRLQN. A helical transmembrane segment spans residues 58–79; that stretch reads PMYFFLSILSFADICYTTVIVP. At 80–100 the chain is on the extracellular side; that stretch reads KMLVNFLSEKKTISYAECLAQ. C97 and C189 form a disulfide bridge. Residues 101–120 form a helical membrane-spanning segment; it reads MYFFLVFGNIDSYLLAAMAI. Over 121–139 the chain is Cytoplasmic; sequence NRCVAICNPFHYVTVMNRR. A helical transmembrane segment spans residues 140–158; the sequence is CCVLLLAFPITFSYFHSLL. Residues 159–196 are Extracellular-facing; it reads HVLLVNRLTFCTSNVIHHFFCDVNPVLKLSCSSTFVNE. Residues 197-219 traverse the membrane as a helical segment; the sequence is IVAMTEGLASVMAPFVCIIISYL. Residues 220 to 236 are Cytoplasmic-facing; the sequence is RILIAVLKIPSAAGKHK. The chain crosses the membrane as a helical span at residues 237-259; it reads AFSTCSSHLTVVILFYGSISYVY. The Extracellular segment spans residues 260 to 271; that stretch reads LQPLSSYTVKDR. A helical transmembrane segment spans residues 272–291; sequence IATINYTVLTSVLNPFIYSL. Residues 292-324 are Cytoplasmic-facing; the sequence is RNKDMKRGLQKLINKIKSQMSRFSTKTNKICGP.

This sequence belongs to the G-protein coupled receptor 1 family.

The protein localises to the cell membrane. In terms of biological role, odorant receptor. This Homo sapiens (Human) protein is Olfactory receptor 1L3 (OR1L3).